The sequence spans 299 residues: Taste receptor type 2 member 42 (299 aa).

Residues 1–7 are Extracellular-facing; the sequence is MATELDK. Residues 8-28 form a helical membrane-spanning segment; sequence IFLILAIAEFIISMLGNVFIG. Residues 29-50 are Cytoplasmic-facing; sequence LVNCSEGIKNQKVFSSDFILTS. The helical transmembrane segment at 51-71 threads the bilayer; the sequence is LAISTIGQLLVILFDSFLVGL. Topologically, residues 72–101 are extracellular; it reads ASHLYTTYRLGKPVIMLWHMTNHLTTWLAT. The helical transmembrane segment at 102–122 threads the bilayer; it reads CLSVFYFFKIAHFPHSLFLWL. Over 123–127 the chain is Cytoplasmic; sequence RWRMN. A helical transmembrane segment spans residues 128 to 148; it reads GMIAMLLILSLFLLIFDSSVL. At 149 to 187 the chain is on the extracellular side; sequence EIFIDISLNIIDKSSLTLYLDESKTLYDKLSILKTLLSL. A helical transmembrane segment spans residues 188–208; it reads TSFIPFSLSLTSVLFLYLSLV. Residues 209–238 are Cytoplasmic-facing; the sequence is RHTRNLKLSSLGSRDSSTEAHRRAMKMVMS. The helical transmembrane segment at 239–259 threads the bilayer; sequence FLFLFIVHFFSLQVANWIFFM. Residues 260-265 lie on the Extracellular side of the membrane; that stretch reads LWNNKY. The chain crosses the membrane as a helical span at residues 266-286; that stretch reads IKFVMLALNAFPSCHSFILIL. The Cytoplasmic portion of the chain corresponds to 287 to 299; the sequence is GNSKLRQTAVRLL.

This sequence belongs to the G-protein coupled receptor T2R family.

The protein resides in the membrane. In terms of biological role, receptor that may play a role in the perception of bitterness and is gustducin-linked. May play a role in sensing the chemical composition of the gastrointestinal content. The activity of this receptor may stimulate alpha gustducin, mediate PLC-beta-2 activation and lead to the gating of TRPM5. The protein is Taste receptor type 2 member 42 (TAS2R42) of Gorilla gorilla gorilla (Western lowland gorilla).